The sequence spans 109 residues: Cell division protein ZapA (109 aa).

The stretch at 22 to 99 forms a coiled coil; the sequence is EQQDALNMAA…IEQALLEQGR (78 aa).

Belongs to the ZapA family. Type 1 subfamily. In terms of assembly, homodimer. Interacts with FtsZ.

The protein localises to the cytoplasm. Functionally, activator of cell division through the inhibition of FtsZ GTPase activity, therefore promoting FtsZ assembly into bundles of protofilaments necessary for the formation of the division Z ring. It is recruited early at mid-cell but it is not essential for cell division. This is Cell division protein ZapA from Yersinia pseudotuberculosis serotype O:1b (strain IP 31758).